Reading from the N-terminus, the 348-residue chain is EGF-like domain-containing protein 1 (348 aa).

The N-terminal stretch at 1–19 (MFYLSTFMTIVISLSLVSC) is a signal peptide. The region spanning 60–92 (TGSNCTVTCQNNGKCYDGSKCLCSSDYTGDLCE) is the EGF-like domain. 3 disulfide bridges follow: C64–C74, C68–C80, and C82–C91. The 244-residue stretch at 99–342 (RCTLDAVVFE…PTCAAPXVGQ (244 aa)) folds into the ZP domain.

Prismatic layer of shell (at protein level). Expressed primarily in the mantle with highest level in the mantle edge and lower level in the mantle pallium.

Its subcellular location is the secreted. The protein is EGF-like domain-containing protein 1 of Pinctada maxima (Silver-lipped pearl oyster).